The primary structure comprises 424 residues: ATP-dependent RNA helicase WM6 (424 aa).

Over residues 1 to 16 (MADNDDLLDYEDEEQT) the composition is skewed to acidic residues. The disordered stretch occupies residues 1 to 27 (MADNDDLLDYEDEEQTETTAVENQEAP). Residues 41–69 (SGFRDFLLKPEILRAIVDCGFEHPSEVQH) carry the Q motif motif. The Helicase ATP-binding domain maps to 72–246 (IPQAVLGMDI…KKFMQDPMEV (175 aa)). ATP is bound at residue 85-92 (AKSGMGKT). Residues 193-196 (DECD) carry the DECD box motif. Residues 258–419 (GLQQHYVNLK…ELPEEIDLST (162 aa)) form the Helicase C-terminal domain.

This sequence belongs to the DEAD box helicase family. DECD subfamily. In terms of assembly, component of the spliceosome. Interacts with the exon junction complex.

It is found in the nucleus speckle. It carries out the reaction ATP + H2O = ADP + phosphate + H(+). Required for mRNA export out of the nucleus. Probable RNA helicase that may regulate entry into mitosis by down-regulating the expression of other genes whose activity may be rate-limiting for entry into mitosis during embryogenesis. Binds to salivary gland chromosomes and modifies position effect variegation. Promotes an open chromatin structure that favors transcription during development by regulating the spread of heterochromatin. This is ATP-dependent RNA helicase WM6 (Hel25E) from Drosophila melanogaster (Fruit fly).